The sequence spans 402 residues: D-mannonate dehydratase (402 aa).

Substrate is bound by residues Asn37 and His122. Catalysis depends on Tyr159, which acts as the Proton donor/acceptor. Mg(2+) is bound at residue Asp210. His212 functions as the Proton donor/acceptor in the catalytic mechanism. 2 residues coordinate Mg(2+): Glu236 and Glu262. Residues Glu262, Arg283, His312, Asp316, and Glu339 each coordinate substrate.

It belongs to the mandelate racemase/muconate lactonizing enzyme family. GalD subfamily. In terms of assembly, homotetramer. Requires Mg(2+) as cofactor.

The catalysed reaction is D-mannonate = 2-dehydro-3-deoxy-D-gluconate + H2O. It participates in carbohydrate metabolism; pentose and glucuronate interconversion. Catalyzes the dehydration of D-mannonate. Has no detectable activity with a panel of 70 other acid sugars (in vitro). This Novosphingobium aromaticivorans (strain ATCC 700278 / DSM 12444 / CCUG 56034 / CIP 105152 / NBRC 16084 / F199) protein is D-mannonate dehydratase (manD).